The primary structure comprises 185 residues: Peptidyl-tRNA hydrolase (185 aa).

A tRNA-binding site is contributed by Phe12. His17 acts as the Proton acceptor in catalysis. TRNA-binding residues include Tyr61, Asn63, and Asn109.

This sequence belongs to the PTH family. As to quaternary structure, monomer.

Its subcellular location is the cytoplasm. It carries out the reaction an N-acyl-L-alpha-aminoacyl-tRNA + H2O = an N-acyl-L-amino acid + a tRNA + H(+). Functionally, hydrolyzes ribosome-free peptidyl-tRNAs (with 1 or more amino acids incorporated), which drop off the ribosome during protein synthesis, or as a result of ribosome stalling. Its function is as follows. Catalyzes the release of premature peptidyl moieties from peptidyl-tRNA molecules trapped in stalled 50S ribosomal subunits, and thus maintains levels of free tRNAs and 50S ribosomes. In Borrelia garinii subsp. bavariensis (strain ATCC BAA-2496 / DSM 23469 / PBi) (Borreliella bavariensis), this protein is Peptidyl-tRNA hydrolase.